Consider the following 436-residue polypeptide: Transcription factor MYB124 (436 aa).

Basic residues predominate over residues 1-11 (MEDTKKKKKKN). The interval 1–23 (MEDTKKKKKKNINNNQDSKKKER) is disordered. A Nuclear localization signal 1 motif is present at residues 8 to 15 (KKKNINNN). HTH myb-type domains follow at residues 20-71 (KKER…YTYL) and 72-126 (NSDF…KKRA). 2 consecutive DNA-binding regions (H-T-H motif) follow at residues 48 to 71 (WAIIASKFKDKSTRQCRRRWYTYL) and 99 to 122 (WTEIAKVVSGRTDNAVKNRFTTLC). The Nuclear localization signal 2 signature appears at 151 to 158 (PRKSENET). A disordered region spans residues 309 to 328 (SWRQPDLHDSPASSEYSSGS). The segment covering 319-328 (PASSEYSSGS) has biased composition (polar residues).

In terms of assembly, interacts with RBR1. Expressed in all shoot organs with higher levels in leaves, stems, flowers, siliques and floral buds. Also detected in roots tips.

The protein localises to the nucleus. In terms of biological role, transcription factor that binds to DNA in promoters cis-regulatory element 5'-GGCGCGC-3' of cell cycle genes, including cyclins, cyclin-dependent kinases (CDKs), and components of the pre-replication complex. Binds to DNA in promoters cis-regulatory element 5'-AGCCG-3' of auxin regulated genes (e.g. PIN3 and PIN7). Together with FAMA and MYB88, ensures that stomata contain just two guard cells (GCs) by enforcing a single symmetric precursor cell division before stomatal maturity. Represses the expression of the mitosis-inducing factors CDKB1-1 and CDKA-1, specifically required for the last guard mother cells (GMC) symmetric divisions in the stomatal pathway. Represses CYCA2-3 in newly formed guard cells. Together with MYB88, regulates stomata spacing by restricting divisions late in the stomatal cell lineage thus limiting the number of GMC divisions. In collaboration with CDKB1-1 and CDKB1-2, restrict the G1/S transition and chloroplast and nuclear number during stomatal formation, and normally maintain fate and developmental progression throughout the stomatal cell lineage. Also involved in the shape regulation of pavement cells. Involved in sensing and/or transducing abiotic stress (e.g. drought and salt), probably via the positive regulation of NAC019. Regulates female reproduction being required for entry into megasporogenesis, probably via the regulation of cell cycle genes. Promotes histone H3K27me3 marks and represses stem cell gene expression. Required for lateral roots (LRs) initiation via the regulation of PIN3 expression in an auxin-dependent manner. Involved in responses to gravity stimulation in primary roots by regulating the transcription of PIN3 and PIN7 in gravity-sensing cells, thus modulating auxin asymmetric redistribution. This Arabidopsis thaliana (Mouse-ear cress) protein is Transcription factor MYB124.